An 89-amino-acid chain; its full sequence is HssA/B-like protein 21 (89 aa).

Belongs to the hssA/B family.

This is HssA/B-like protein 21 (hssl21) from Dictyostelium discoideum (Social amoeba).